A 211-amino-acid polypeptide reads, in one-letter code: UPF0637 protein Bsph_1379 (211 aa).

Belongs to the UPF0637 family.

This is UPF0637 protein Bsph_1379 from Lysinibacillus sphaericus (strain C3-41).